We begin with the raw amino-acid sequence, 274 residues long: Rhamnulose-1-phosphate aldolase (274 aa).

Glu117 is an active-site residue. Residues His141, His143, and His212 each coordinate Zn(2+).

It belongs to the aldolase class II family. RhaD subfamily. As to quaternary structure, homotetramer. Zn(2+) is required as a cofactor.

The protein resides in the cytoplasm. It carries out the reaction L-rhamnulose 1-phosphate = (S)-lactaldehyde + dihydroxyacetone phosphate. Its pathway is carbohydrate degradation; L-rhamnose degradation; glycerone phosphate from L-rhamnose: step 3/3. In terms of biological role, catalyzes the reversible cleavage of L-rhamnulose-1-phosphate to dihydroxyacetone phosphate (DHAP) and L-lactaldehyde. The protein is Rhamnulose-1-phosphate aldolase of Escherichia coli O17:K52:H18 (strain UMN026 / ExPEC).